We begin with the raw amino-acid sequence, 693 residues long: Phosphoribosylformylglycinamidine synthase subunit PurL (693 aa).

Residue His-34 is part of the active site. Residues Tyr-37 and Lys-76 each coordinate ATP. Glu-78 contacts Mg(2+). Residues 79-82 (SHNH) and Arg-101 contribute to the substrate site. The Proton acceptor role is filled by His-80. A Mg(2+)-binding site is contributed by Asp-102. Substrate is bound at residue Gln-222. Asp-248 lines the Mg(2+) pocket. 292–294 (ETQ) is a binding site for substrate. 2 residues coordinate ATP: Asp-470 and Gly-507. Residue Ser-510 coordinates substrate.

Belongs to the FGAMS family. As to quaternary structure, monomer. Part of the FGAM synthase complex composed of 1 PurL, 1 PurQ and 2 PurS subunits.

Its subcellular location is the cytoplasm. The enzyme catalyses N(2)-formyl-N(1)-(5-phospho-beta-D-ribosyl)glycinamide + L-glutamine + ATP + H2O = 2-formamido-N(1)-(5-O-phospho-beta-D-ribosyl)acetamidine + L-glutamate + ADP + phosphate + H(+). Its pathway is purine metabolism; IMP biosynthesis via de novo pathway; 5-amino-1-(5-phospho-D-ribosyl)imidazole from N(2)-formyl-N(1)-(5-phospho-D-ribosyl)glycinamide: step 1/2. Functionally, part of the phosphoribosylformylglycinamidine synthase complex involved in the purines biosynthetic pathway. Catalyzes the ATP-dependent conversion of formylglycinamide ribonucleotide (FGAR) and glutamine to yield formylglycinamidine ribonucleotide (FGAM) and glutamate. The FGAM synthase complex is composed of three subunits. PurQ produces an ammonia molecule by converting glutamine to glutamate. PurL transfers the ammonia molecule to FGAR to form FGAM in an ATP-dependent manner. PurS interacts with PurQ and PurL and is thought to assist in the transfer of the ammonia molecule from PurQ to PurL. The protein is Phosphoribosylformylglycinamidine synthase subunit PurL of Pyrobaculum neutrophilum (strain DSM 2338 / JCM 9278 / NBRC 100436 / V24Sta) (Thermoproteus neutrophilus).